Consider the following 842-residue polypeptide: MSRPLSDQEKRKQISVRGLAGVENVTELKKNFNRHLHFTLVKDRNVATPRDYYFALAHTVRDHLVGRWIRTQQHYYEKDPKRIYYLSLEFYMGRTLQNTMVNLALENACDEATYQLGLDMEELEEIEEDAGLGNGGLGRLAACFLDSMATLGLAAYGYGIRYEFGIFNQKISGGWQMEEADVWLRYGNPWEKARPEFTLPVHFYGHVEHTSQGAKWVDTQVVLAMPYDTPVPGYRNNVVNTMRLWSAKAPNDFNLKDFNVGGYIQAVLDRNLAENIPRVLYPNDNFFEGKELRLKQEYFVVAATLQDIIRRFKSSKFGCRDPVRTNFDAFPDKVAIQLNDTHPSLAIPELMRILVDLERMDWDKAWDVTVRTCAYTNHTVLPEALERWPVHLLETLLPRHLQIIYEINQRFLNRVAATFPGDVDRLRRMSLVEEGAVKRINMAHLCIAGSHAVNGVARIHSEILKKTIFKDFYELEPHKFQNKTNGITPRRWLVLCNPGLAEVIAERIGEDFISDLDQLRKLLSFVDDEAFIRDVAKVKQENKLKFAAYLEREYKVHINPNSLFDIQVKRIHEYKRQLLNCLHVITLYNRIKREPNKFFVPRTVMIGGKAAPGHHMAKMIIRLITAIGDVVNHDPTVGDRLRVIFLENYRVSLSEKVIPAADLSEQISTAGTEASGTGNMKFMLNGALTIGTMDGANVEMAEEAGEENFFIFGMRVEDVDKLDQRGYNAQEYYDRIPELRQVIEQLSSGFFSPKQPDLFKDIVNMLMHHDRFKVFADYEDYIKCQEKVSALYKNPREWTRMVIRNIATSGKFSSDRTIAQYAREIWGVEPSRQRLPAPDEAI.

An N-acetylserine modification is found at serine 2. Serine 15 carries the phosphoserine; by PHK; in form phosphorylase A modification. Residues aspartate 43 and tyrosine 76 each coordinate AMP. Tyrosine 204 and tyrosine 227 each carry phosphotyrosine. 310-319 (RRFKSSKFGC) is an AMP binding site. Phosphoserine is present on serine 430. At tyrosine 473 the chain carries Phosphotyrosine. A Phosphoserine modification is found at serine 514. Residue lysine 681 is modified to N6-(pyridoxal phosphate)lysine. 2 positions are modified to phosphoserine: serine 747 and serine 748.

The protein belongs to the glycogen phosphorylase family. Homodimer. Homotetramer; to form the enzymatically active phosphorylase A. It depends on pyridoxal 5'-phosphate as a cofactor. Phosphorylation of Ser-15 converts phosphorylase B (unphosphorylated) to phosphorylase A.

The enzyme catalyses [(1-&gt;4)-alpha-D-glucosyl](n) + phosphate = [(1-&gt;4)-alpha-D-glucosyl](n-1) + alpha-D-glucose 1-phosphate. Its activity is regulated as follows. Allosterically regulated through the non-covalent binding of metabolites, being activated by AMP and inhibited by ATP, ADP, and glucose-6-phosphate. The activity is also controlled by post-translational modifications including phosphorylation. Allosteric enzyme that catalyzes the rate-limiting step in glycogen catabolism, the phosphorolytic cleavage of glycogen to produce glucose-1-phosphate, and plays a central role in maintaining cellular and organismal glucose homeostasis. This Macaca fascicularis (Crab-eating macaque) protein is Glycogen phosphorylase, muscle form.